A 168-amino-acid polypeptide reads, in one-letter code: RxLR effector protein CRE8 (168 aa).

The first 23 residues, 1–23 (MRLPSILVVAASTLFLHYGYTSA), serve as a signal peptide directing secretion. Positions 54–69 (RFLRDGKIAEGDNEER) match the RxLR-dEER motif.

It belongs to the RxLR effector family.

The protein resides in the secreted. It is found in the host cell. Effector that is involved in host plant infection. Contributes to virulence during the early infection stage, by inhibiting plant defense responses induced by both PAMP-triggered immunity (PTI) and effector-triggered immunity (ETI). The protein is RxLR effector protein CRE8 of Phytophthora infestans (strain T30-4) (Potato late blight agent).